The following is a 128-amino-acid chain: Glycine cleavage system H protein (128 aa).

Positions 25-107 constitute a Lipoyl-binding domain; it reads TVRVGITDFA…YEGGWLFEIT (83 aa). Residue Lys-66 is modified to N6-lipoyllysine.

This sequence belongs to the GcvH family. In terms of assembly, the glycine cleavage system is composed of four proteins: P, T, L and H. (R)-lipoate is required as a cofactor.

Its function is as follows. The glycine cleavage system catalyzes the degradation of glycine. The H protein shuttles the methylamine group of glycine from the P protein to the T protein. The protein is Glycine cleavage system H protein of Micrococcus luteus (strain ATCC 4698 / DSM 20030 / JCM 1464 / CCM 169 / CCUG 5858 / IAM 1056 / NBRC 3333 / NCIMB 9278 / NCTC 2665 / VKM Ac-2230) (Micrococcus lysodeikticus).